The primary structure comprises 243 residues: Adenylate dimethylallyltransferase (243 aa).

Belongs to the isopentenyl transferase family.

The enzyme catalyses dimethylallyl diphosphate + AMP = N(6)-(dimethylallyl)adenosine 5'-phosphate + diphosphate. Functionally, transfers dimethylallyl groups to AMP as part of the biosynthesis of cytokinin phytohormones. The chain is Adenylate dimethylallyltransferase (tzs) from Rhizobium rhizogenes (Agrobacterium rhizogenes).